We begin with the raw amino-acid sequence, 350 residues long: UDP-N-acetylenolpyruvoylglucosamine reductase (350 aa).

Positions 25–194 constitute an FAD-binding PCMH-type domain; that stretch reads VGPVARRLIT…LDVGGRSAPL (170 aa). Arg-166 is an active-site residue. The active-site Proton donor is the Ser-243. Residue Glu-342 is part of the active site.

The protein belongs to the MurB family. Requires FAD as cofactor.

It localises to the cytoplasm. It carries out the reaction UDP-N-acetyl-alpha-D-muramate + NADP(+) = UDP-N-acetyl-3-O-(1-carboxyvinyl)-alpha-D-glucosamine + NADPH + H(+). The protein operates within cell wall biogenesis; peptidoglycan biosynthesis. Its function is as follows. Cell wall formation. The protein is UDP-N-acetylenolpyruvoylglucosamine reductase of Mycobacterium sp. (strain MCS).